Consider the following 110-residue polypeptide: Chloride intracellular channel protein 1 (110 aa).

Residue A2 is modified to N-acetylalanine. A required for insertion into the membrane region spans residues A2 to P90. K13 is modified (N6-acetyllysine). Residues C24–S27 carry the G-site motif. The cysteines at positions 24 and 59 are disulfide-linked. The chain crosses the membrane as a helical span at residues F26 to V46.

The protein belongs to the chloride channel CLIC family. As to quaternary structure, monomer. Homodimer (in vitro). Interacts with TRAPPC2. Dimerization requires a conformation change that leads to the exposure of a large hydrophobic surface. In vivo, this may lead to membrane insertion.

It is found in the nucleus. The protein resides in the nucleus membrane. The protein localises to the cytoplasm. It localises to the cell membrane. Its subcellular location is the endoplasmic reticulum. It catalyses the reaction L-dehydroascorbate + 2 glutathione = glutathione disulfide + L-ascorbate. The catalysed reaction is chloride(in) = chloride(out). It carries out the reaction iodide(out) = iodide(in). The enzyme catalyses thiocyanate(in) = thiocyanate(out). It catalyses the reaction nitrate(in) = nitrate(out). The catalysed reaction is bromide(in) = bromide(out). It carries out the reaction fluoride(in) = fluoride(out). In terms of biological role, in the soluble state, catalyzes glutaredoxin-like thiol disulfide exchange reactions with reduced glutathione as electron donor. Reduces selenite and dehydroascorbate and may act as an antioxidant during oxidative stress response. Can insert into membranes and form voltage-dependent multi-ion conductive channels. Membrane insertion seems to be redox-regulated and may occur only under oxidizing conditions. Involved in regulation of the cell cycle. The chain is Chloride intracellular channel protein 1 (CLIC1) from Sus scrofa (Pig).